The sequence spans 899 residues: Probable disease resistance protein RXW24L (899 aa).

A coiled-coil region spans residues 13–50 (DRLSQEYDQFKGVEDQVTELKSNLNLLKSFLKDADAKK). One can recognise an NB-ARC domain in the interval 143 to 455 (LQERQREMRH…AEGISERRRY (313 aa)). 189-196 (GMGGLGKT) contacts ATP.

The protein belongs to the disease resistance NB-LRR family.

Functionally, potential disease resistance protein. This Arabidopsis thaliana (Mouse-ear cress) protein is Probable disease resistance protein RXW24L (RXW24L).